A 386-amino-acid polypeptide reads, in one-letter code: Protein RecA (386 aa).

Residue 76-83 participates in ATP binding; sequence GPESSGKT. Positions 362-386 are disordered; the sequence is FDDEDDDFDASTAPAGTFTEVTTEN.

The protein belongs to the RecA family.

It localises to the cytoplasm. Its function is as follows. Can catalyze the hydrolysis of ATP in the presence of single-stranded DNA, the ATP-dependent uptake of single-stranded DNA by duplex DNA, and the ATP-dependent hybridization of homologous single-stranded DNAs. It interacts with LexA causing its activation and leading to its autocatalytic cleavage. This is Protein RecA from Corynebacterium efficiens (strain DSM 44549 / YS-314 / AJ 12310 / JCM 11189 / NBRC 100395).